We begin with the raw amino-acid sequence, 374 residues long: RNA polymerase sigma factor SigA (374 aa).

The sigma-70 factor domain-2 stretch occupies residues 141–211 (LAEANLRLVV…TRAIADQART (71 aa)). An Interaction with polymerase core subunit RpoC motif is present at residues 165–168 (DLIQ). Residues 220–296 (ETINKLIRVQ…DQDATSPSDH (77 aa)) form a sigma-70 factor domain-3 region. The interval 309–362 (VLDTLTDREENVLRLRFGLDDGRTRTLEEVGRVFGVTRERIRQIEAKALRKLRH) is sigma-70 factor domain-4. Residues 335–354 (LEEVGRVFGVTRERIRQIEA) constitute a DNA-binding region (H-T-H motif).

It belongs to the sigma-70 factor family. RpoD/SigA subfamily. In terms of assembly, interacts transiently with the RNA polymerase catalytic core.

It is found in the cytoplasm. Sigma factors are initiation factors that promote the attachment of RNA polymerase to specific initiation sites and are then released. This sigma factor is the primary sigma factor during exponential growth. The chain is RNA polymerase sigma factor SigA from Listeria monocytogenes serovar 1/2a (strain ATCC BAA-679 / EGD-e).